We begin with the raw amino-acid sequence, 314 residues long: WD repeat domain-containing protein 83 (314 aa).

WD repeat units follow at residues C23 to T62, G65 to K104, G107 to I146, E151 to D188, Y189 to E228, G231 to K272, and V275 to G313.

It belongs to the WD repeat MORG1 family.

It localises to the cytoplasm. Molecular scaffold protein for various multimeric protein complexes. Acts as a module in the assembly of a multicomponent scaffold for the ERK pathway, linking ERK responses to specific agonists. Also involved in response to hypoxia by acting as a negative regulator of HIF1A/HIF-1-alpha. This Xenopus tropicalis (Western clawed frog) protein is WD repeat domain-containing protein 83 (wdr83).